A 343-amino-acid chain; its full sequence is MGEYIMEKNTIILGIETSCDETAVAVVKNGTEIIANVVASQIESHKRFGGVVPEIASRHHVEEITVVLEEALKEANITFDDIDAIAVTEGPGLVGALLIGVNAAKAVAFAHDIPLVGVHHIAGHIYANRLVKEVQFPLLSLVVSGGHTELVYMKEHGSFEVIGETRDDAAGEAYDKVARTLSMPYPGGPHIDRLAHEGKPTIDLPRAWLEPDSYDFSFSGLKSAVINTVHNAKQRGIEIAPEDLAASFQESVIDVLVTKASRAADAYNVKQVLLAGGVAANKGLRARLETEFAQKENVELIIPPLSLCTDNAAMIAAAGTIAYEQGKRATLALNANPGLDIEA.

Fe cation contacts are provided by His120 and His124. Residues 142-146 (VVSGG), Asp175, Gly188, Asp192, and Asn281 contribute to the substrate site. Residue Asp310 participates in Fe cation binding.

The protein belongs to the KAE1 / TsaD family. It depends on Fe(2+) as a cofactor.

Its subcellular location is the cytoplasm. The enzyme catalyses L-threonylcarbamoyladenylate + adenosine(37) in tRNA = N(6)-L-threonylcarbamoyladenosine(37) in tRNA + AMP + H(+). Its function is as follows. Required for the formation of a threonylcarbamoyl group on adenosine at position 37 (t(6)A37) in tRNAs that read codons beginning with adenine. Is involved in the transfer of the threonylcarbamoyl moiety of threonylcarbamoyl-AMP (TC-AMP) to the N6 group of A37, together with TsaE and TsaB. TsaD likely plays a direct catalytic role in this reaction. The chain is tRNA N6-adenosine threonylcarbamoyltransferase from Bacillus anthracis.